A 269-amino-acid chain; its full sequence is UPF0761 membrane protein HI_0276 (269 aa).

6 consecutive transmembrane segments (helical) span residues 32-52 (MLAM…FPVF), 89-109 (MSAV…NNID), 128-148 (FAIY…SIGI), 168-188 (LLSF…YTVV), 203-223 (FLAA…IVTF), and 232-252 (AMAT…VVLV).

This sequence belongs to the UPF0761 family.

The protein resides in the cell inner membrane. The polypeptide is UPF0761 membrane protein HI_0276 (Haemophilus influenzae (strain ATCC 51907 / DSM 11121 / KW20 / Rd)).